We begin with the raw amino-acid sequence, 330 residues long: tRNA pseudouridine synthase B (330 aa).

The Nucleophile role is filled by Asp42.

Belongs to the pseudouridine synthase TruB family. Type 1 subfamily.

It carries out the reaction uridine(55) in tRNA = pseudouridine(55) in tRNA. Functionally, responsible for synthesis of pseudouridine from uracil-55 in the psi GC loop of transfer RNAs. The polypeptide is tRNA pseudouridine synthase B (Lactococcus lactis subsp. cremoris (strain MG1363)).